Here is a 471-residue protein sequence, read N- to C-terminus: Uronate isomerase (471 aa).

The protein belongs to the metallo-dependent hydrolases superfamily. Uronate isomerase family.

The catalysed reaction is D-glucuronate = D-fructuronate. The enzyme catalyses aldehydo-D-galacturonate = keto-D-tagaturonate. Its pathway is carbohydrate metabolism; pentose and glucuronate interconversion. The sequence is that of Uronate isomerase from Cellvibrio japonicus (strain Ueda107) (Pseudomonas fluorescens subsp. cellulosa).